We begin with the raw amino-acid sequence, 688 residues long: Glycine--tRNA ligase beta subunit (688 aa).

Belongs to the class-II aminoacyl-tRNA synthetase family. As to quaternary structure, tetramer of two alpha and two beta subunits.

The protein resides in the cytoplasm. The catalysed reaction is tRNA(Gly) + glycine + ATP = glycyl-tRNA(Gly) + AMP + diphosphate. The sequence is that of Glycine--tRNA ligase beta subunit from Haemophilus influenzae (strain PittGG).